A 578-amino-acid polypeptide reads, in one-letter code: Membrane protein insertase YidC (578 aa).

The chain crosses the membrane as a helical span at residues isoleucine 3–tryptophan 23. The segment at alanine 34–aspartate 72 is disordered. A compositionally biased stretch (polar residues) spans alanine 37 to alanine 66. 5 helical membrane-spanning segments follow: residues leucine 361–leucine 381, leucine 387–phenylalanine 407, leucine 457–leucine 477, proline 500–proline 520, and proline 535–valine 555.

It belongs to the OXA1/ALB3/YidC family. Type 1 subfamily. As to quaternary structure, interacts with the Sec translocase complex via SecD. Specifically interacts with transmembrane segments of nascent integral membrane proteins during membrane integration.

The protein resides in the cell inner membrane. Functionally, required for the insertion and/or proper folding and/or complex formation of integral membrane proteins into the membrane. Involved in integration of membrane proteins that insert both dependently and independently of the Sec translocase complex, as well as at least some lipoproteins. Aids folding of multispanning membrane proteins. This is Membrane protein insertase YidC from Pseudomonas aeruginosa (strain ATCC 15692 / DSM 22644 / CIP 104116 / JCM 14847 / LMG 12228 / 1C / PRS 101 / PAO1).